Reading from the N-terminus, the 192-residue chain is GTP cyclohydrolase 1 (192 aa).

Positions 82, 85, and 153 each coordinate Zn(2+).

The protein belongs to the GTP cyclohydrolase I family. In terms of assembly, toroid-shaped homodecamer, composed of two pentamers of five dimers.

It catalyses the reaction GTP + H2O = 7,8-dihydroneopterin 3'-triphosphate + formate + H(+). It functions in the pathway cofactor biosynthesis; 7,8-dihydroneopterin triphosphate biosynthesis; 7,8-dihydroneopterin triphosphate from GTP: step 1/1. The protein is GTP cyclohydrolase 1 of Rickettsia bellii (strain OSU 85-389).